The sequence spans 320 residues: tRNA U34 carboxymethyltransferase (320 aa).

Carboxy-S-adenosyl-L-methionine contacts are provided by residues K89, W103, K108, G127, 177–178 (LE), M193, Y197, and R312.

It belongs to the class I-like SAM-binding methyltransferase superfamily. CmoB family. Homotetramer.

It carries out the reaction carboxy-S-adenosyl-L-methionine + 5-hydroxyuridine(34) in tRNA = 5-carboxymethoxyuridine(34) in tRNA + S-adenosyl-L-homocysteine + H(+). Catalyzes carboxymethyl transfer from carboxy-S-adenosyl-L-methionine (Cx-SAM) to 5-hydroxyuridine (ho5U) to form 5-carboxymethoxyuridine (cmo5U) at position 34 in tRNAs. The protein is tRNA U34 carboxymethyltransferase of Stutzerimonas stutzeri (strain A1501) (Pseudomonas stutzeri).